Consider the following 380-residue polypeptide: Erythronate-4-phosphate dehydrogenase (380 aa).

Residues Ser-45 and Thr-66 each coordinate substrate. NAD(+) is bound by residues Asp-146, Thr-174, 205–207 (ASR), and Asp-231. Arg-207 is a catalytic residue. Glu-236 is an active-site residue. Residue His-253 is the Proton donor of the active site. Gly-256 is a binding site for NAD(+). Residue Tyr-257 participates in substrate binding.

Belongs to the D-isomer specific 2-hydroxyacid dehydrogenase family. PdxB subfamily. In terms of assembly, homodimer.

It is found in the cytoplasm. It carries out the reaction 4-phospho-D-erythronate + NAD(+) = (R)-3-hydroxy-2-oxo-4-phosphooxybutanoate + NADH + H(+). Its pathway is cofactor biosynthesis; pyridoxine 5'-phosphate biosynthesis; pyridoxine 5'-phosphate from D-erythrose 4-phosphate: step 2/5. Its function is as follows. Catalyzes the oxidation of erythronate-4-phosphate to 3-hydroxy-2-oxo-4-phosphonooxybutanoate. This Pseudomonas putida (strain ATCC 700007 / DSM 6899 / JCM 31910 / BCRC 17059 / LMG 24140 / F1) protein is Erythronate-4-phosphate dehydrogenase.